A 338-amino-acid chain; its full sequence is DNA-directed RNA polymerase subunit alpha (338 aa).

Positions 1–234 are alpha N-terminal domain (alpha-NTD); sequence MIQKNWQELT…DQLNVFVNFE (234 aa). The alpha C-terminal domain (alpha-CTD) stretch occupies residues 250–338; sequence FNPALLKKVD…DLAKRFEEHY (89 aa).

The protein belongs to the RNA polymerase alpha chain family. Homodimer. The RNAP catalytic core consists of 2 alpha, 1 beta, 1 beta' and 1 omega subunit. When a sigma factor is associated with the core the holoenzyme is formed, which can initiate transcription.

It catalyses the reaction RNA(n) + a ribonucleoside 5'-triphosphate = RNA(n+1) + diphosphate. Its function is as follows. DNA-dependent RNA polymerase catalyzes the transcription of DNA into RNA using the four ribonucleoside triphosphates as substrates. The polypeptide is DNA-directed RNA polymerase subunit alpha (Methylocella silvestris (strain DSM 15510 / CIP 108128 / LMG 27833 / NCIMB 13906 / BL2)).